A 188-amino-acid polypeptide reads, in one-letter code: MSTMFADTILIVFISICTALLAEGITWVLVYRTDKYKRLKAEVEKQSKKLEKKKETITESAGRQQKKKIERQEEKLKNNNRDLSMVRMKSMFAIGFCFTALMGMFNSIFDGRVVAKLPFVPLSYIQGLSHRNLLGEDYTDCSFIFLYILCTMSIRQNIQKMLGLAPSRAATKQAGGFLGPPPQAAKFS.

Residues 1 to 4 (MSTM) lie on the Lumenal side of the membrane. A helical membrane pass occupies residues 5–32 (FADTILIVFISICTALLAEGITWVLVYR). A coiled-coil region spans residues 32 to 89 (RTDKYKRLKAEVEKQSKKLEKKKETITESAGRQQKKKIERQEEKLKNNNRDLSMVRMK). Residues 33 to 86 (TDKYKRLKAEVEKQSKKLEKKKETITESAGRQQKKKIERQEEKLKNNNRDLSMV) are Cytoplasmic-facing. The helical transmembrane segment at 87-106 (RMKSMFAIGFCFTALMGMFN) threads the bilayer. Topologically, residues 107 to 120 (SIFDGRVVAKLPFV) are lumenal. The stretch at 121–130 (PLSYIQGLSH) is an intramembrane region. The Lumenal portion of the chain corresponds to 131–140 (RNLLGEDYTD). The helical transmembrane segment at 141–162 (CSFIFLYILCTMSIRQNIQKML) threads the bilayer. Residues 163–188 (GLAPSRAATKQAGGFLGPPPQAAKFS) are Cytoplasmic-facing.

Belongs to the TMCO1 family. In terms of assembly, homodimer and homotetramer. Component of the multi-pass translocon (MPT) complex.

The protein localises to the endoplasmic reticulum membrane. It localises to the golgi apparatus membrane. Functionally, calcium-selective channel required to prevent calcium stores from overfilling, thereby playing a key role in calcium homeostasis. In response to endoplasmic reticulum (ER) overloading, assembles into a homotetramer, forming a functional calcium-selective channel, regulating the calcium content in endoplasmic reticulum store. Component of the multi-pass translocon (MPT) complex that mediates insertion of multi-pass membrane proteins into the lipid bilayer of membranes. This chain is Calcium load-activated calcium channel, found in Danio rerio (Zebrafish).